The primary structure comprises 300 residues: Cation-efflux pump FieF (300 aa).

The chain crosses the membrane as a helical span at residues 24 to 44 (LLIKILAWWYTGSVSILAALV). Zn(2+)-binding residues include Asp-45 and Asp-49. A run of 2 helical transmembrane segments spans residues 82–102 (AALA…LTSI) and 114–134 (PGVG…LVTF). His-153 and Asp-157 together coordinate Zn(2+). The next 2 helical transmembrane spans lie at 156-176 (SDVM…YGWH) and 178-198 (ADAL…LRMG).

This sequence belongs to the cation diffusion facilitator (CDF) transporter (TC 2.A.4) family. FieF subfamily. Homodimer.

It localises to the cell inner membrane. The catalysed reaction is Zn(2+)(in) + H(+)(out) = Zn(2+)(out) + H(+)(in). The enzyme catalyses Cd(2+)(in) + H(+)(out) = Cd(2+)(out) + H(+)(in). It carries out the reaction Fe(2+)(in) + H(+)(out) = Fe(2+)(out) + H(+)(in). Its function is as follows. Divalent metal cation transporter which exports Zn(2+), Cd(2+) and possibly Fe(2+). May be involved in zinc and iron detoxification by efflux. This Salmonella agona (strain SL483) protein is Cation-efflux pump FieF.